A 402-amino-acid polypeptide reads, in one-letter code: Endo-polygalacturonase (402 aa).

The signal sequence occupies residues 1–23 (MEYQSGKRVLSLSLGLIGLFSAS). Aspartate 249 acts as the Proton donor in catalysis. Residue histidine 277 is part of the active site.

This sequence belongs to the glycosyl hydrolase 28 family. As to quaternary structure, monomer.

It localises to the secreted. The catalysed reaction is (1,4-alpha-D-galacturonosyl)n+m + H2O = (1,4-alpha-D-galacturonosyl)n + (1,4-alpha-D-galacturonosyl)m.. Its function is as follows. Involved in maceration and soft-rotting of plant tissue. This chain is Endo-polygalacturonase (peh), found in Pectobacterium carotovorum subsp. carotovorum (Erwinia carotovora subsp. carotovora).